Reading from the N-terminus, the 355-residue chain is S-adenosylmethionine:tRNA ribosyltransferase-isomerase (355 aa).

It belongs to the QueA family. In terms of assembly, monomer.

Its subcellular location is the cytoplasm. The enzyme catalyses 7-aminomethyl-7-carbaguanosine(34) in tRNA + S-adenosyl-L-methionine = epoxyqueuosine(34) in tRNA + adenine + L-methionine + 2 H(+). Its pathway is tRNA modification; tRNA-queuosine biosynthesis. Transfers and isomerizes the ribose moiety from AdoMet to the 7-aminomethyl group of 7-deazaguanine (preQ1-tRNA) to give epoxyqueuosine (oQ-tRNA). The sequence is that of S-adenosylmethionine:tRNA ribosyltransferase-isomerase from Burkholderia cenocepacia (strain ATCC BAA-245 / DSM 16553 / LMG 16656 / NCTC 13227 / J2315 / CF5610) (Burkholderia cepacia (strain J2315)).